A 345-amino-acid polypeptide reads, in one-letter code: NADH-quinone oxidoreductase subunit H (345 aa).

The next 8 helical transmembrane spans lie at 13–33 (VLII…LLFL), 84–104 (FMLA…VIPF), 115–135 (VAIL…IMGG), 161–181 (IGLI…SAIV), 190–210 (FFSW…ISAL), 248–268 (YIAI…GWLS), 278–298 (IWMV…KAIV), and 309–329 (LGWK…AFAA).

This sequence belongs to the complex I subunit 1 family. NDH-1 is composed of 14 different subunits. Subunits NuoA, H, J, K, L, M, N constitute the membrane sector of the complex.

Its subcellular location is the cell inner membrane. The enzyme catalyses a quinone + NADH + 5 H(+)(in) = a quinol + NAD(+) + 4 H(+)(out). NDH-1 shuttles electrons from NADH, via FMN and iron-sulfur (Fe-S) centers, to quinones in the respiratory chain. The immediate electron acceptor for the enzyme in this species is believed to be ubiquinone. Couples the redox reaction to proton translocation (for every two electrons transferred, four hydrogen ions are translocated across the cytoplasmic membrane), and thus conserves the redox energy in a proton gradient. This subunit may bind ubiquinone. This chain is NADH-quinone oxidoreductase subunit H, found in Dinoroseobacter shibae (strain DSM 16493 / NCIMB 14021 / DFL 12).